The following is a 438-amino-acid chain: MEVSRPYVNTVDVIDFGIDKRFFRLPVSGILAQEGITPNGPQIAIINALEDPRHRFVTACVSRRVGKSFIAYTLGFLKLLEPNVKVLVVAPNYSLANIGWSQIRGLIKKYGLQTERENAKDKEIELANGSLFKLASAAQADSAVGRSYDFIIFDEAAISDVGGDAFRVQLRPTLDKPNSKALFISTPRGGNWFKEFYAYGFDDTLPNWVSIHGTYRDNPRADLNDIEEARRTVSKNYFRQEYEADFSVFEGQIFDTFNAIDHVKDLKGMRHFFKDDEAFETLLGIDVGYRDPTAVLTIKYHYDTDTYYVLEEYQQAEKTTAQHAAYIQHCIDRYKVDRIFVDSAAAQFRQDLAYEHEIASAPAKKSVLDGLACLQALFQQGKIIVDASCSSLIHALQNYKWDFQEGEEKLSREKPRHDANSHLCDALRYGIYSISRGK.

The short motif at 62–68 (SRRVGKS) is the Walker A motif element. Residues 150–155 (FIIFDE) carry the Walker B motif motif. Residue Glu-155 is the For ATPase activity of the active site. Mg(2+) is bound by residues Asp-286, Asp-342, and Asp-418.

Belongs to the Tequatrovirus large terminase family. Interacts with the terminase small subunit; the active complex is probably heterooligomeric. Interacts with the portal protein. Mg(2+) serves as cofactor.

Functionally, the terminase large subunit acts as an ATP driven molecular motor necessary for viral DNA translocation into empty capsids and as an endonuclease that cuts the viral genome to initiate and to end a packaging reaction The terminase lies at a unique vertex of the procapsid and is composed of two subunits, a small terminase subunit involved in viral DNA recognition (packaging sequence), and a large terminase subunit possessing endonucleolytic and ATPase activities. Both terminase subunits heterooligomerize and are docked on the portal protein to form the packaging machine. The terminase large subunit exhibits endonuclease activity and cleaves the viral genome concatemer. Direct long terminal repeats at each end of the genome are duplicated in concert with packaging. Once the capsid is packaged with the DNA, the terminase complex is substituted by the tail. This Escherichia phage T5 (Enterobacteria phage T5) protein is Terminase, large subunit.